The following is a 124-amino-acid chain: Small ribosomal subunit protein uS12c (124 aa).

Residues 105-124 (AGVKDRRQSRSKYGAKRPKA) are disordered. The segment covering 113–124 (SRSKYGAKRPKA) has biased composition (basic residues).

This sequence belongs to the universal ribosomal protein uS12 family. In terms of assembly, part of the 30S ribosomal subunit.

The protein resides in the plastid. Its subcellular location is the cyanelle. In terms of biological role, with S4 and S5 plays an important role in translational accuracy. Located at the interface of the 30S and 50S subunits. The chain is Small ribosomal subunit protein uS12c (rps12) from Cyanophora paradoxa.